The primary structure comprises 53 residues: TEQAAPAADDPEGMVKASCASCHGQNLEGGVGPALADVGSRNAMPAGMVDPAK.

Residues C19, C22, H23, and M44 each contribute to the heme c site.

Binds 1 heme c group covalently per subunit.

It is found in the cell membrane. This chain is Cytochrome c-552, found in Schinkia azotoformans (Bacillus azotoformans).